Here is a 404-residue protein sequence, read N- to C-terminus: Putative nitronate monooxygenase (404 aa).

FMN is bound at residue 41–43 (PMA). His-224 serves as the catalytic Proton acceptor. Position 224 (His-224) interacts with substrate. Residues 270 to 272 (AGG) and 293 to 294 (GT) contribute to the FMN site.

The protein belongs to the nitronate monooxygenase family. NMO class I subfamily. FMN is required as a cofactor.

It localises to the cytoplasm. It catalyses the reaction ethylnitronate + O2 = chemical entity + acetaldehyde + nitrite + H(+). Functionally, catalyzes the oxidation of alkyl nitronates to produce the corresponding carbonyl compounds and nitrites. The protein is Putative nitronate monooxygenase of Saccharomyces cerevisiae (strain ATCC 204508 / S288c) (Baker's yeast).